Here is a 449-residue protein sequence, read N- to C-terminus: UDP-N-acetylmuramoylalanine--D-glutamate ligase (449 aa).

107–113 provides a ligand contact to ATP; that stretch reads GSNGKST.

It belongs to the MurCDEF family.

It localises to the cytoplasm. It catalyses the reaction UDP-N-acetyl-alpha-D-muramoyl-L-alanine + D-glutamate + ATP = UDP-N-acetyl-alpha-D-muramoyl-L-alanyl-D-glutamate + ADP + phosphate + H(+). Its pathway is cell wall biogenesis; peptidoglycan biosynthesis. Cell wall formation. Catalyzes the addition of glutamate to the nucleotide precursor UDP-N-acetylmuramoyl-L-alanine (UMA). The sequence is that of UDP-N-acetylmuramoylalanine--D-glutamate ligase from Hydrogenovibrio crunogenus (strain DSM 25203 / XCL-2) (Thiomicrospira crunogena).